The primary structure comprises 443 residues: D-inositol 3-phosphate glycosyltransferase (443 aa).

1D-myo-inositol 3-phosphate is bound at residue His-26. UDP-N-acetyl-alpha-D-glucosamine-binding positions include 32–33 (QP) and Gly-40. Residues 37-42 (DAGGMN), Lys-95, Tyr-128, Thr-152, and Arg-172 each bind 1D-myo-inositol 3-phosphate. Residues Arg-246, Lys-251, and Gln-304 each contribute to the UDP-N-acetyl-alpha-D-glucosamine site. Mg(2+)-binding residues include Tyr-313, Arg-314, and Ala-316. Residues Glu-326 and Glu-334 each contribute to the UDP-N-acetyl-alpha-D-glucosamine site. Thr-340 serves as a coordination point for Mg(2+).

It belongs to the glycosyltransferase group 1 family. MshA subfamily. Homodimer.

It carries out the reaction 1D-myo-inositol 3-phosphate + UDP-N-acetyl-alpha-D-glucosamine = 1D-myo-inositol 2-acetamido-2-deoxy-alpha-D-glucopyranoside 3-phosphate + UDP + H(+). Functionally, catalyzes the transfer of a N-acetyl-glucosamine moiety to 1D-myo-inositol 3-phosphate to produce 1D-myo-inositol 2-acetamido-2-deoxy-glucopyranoside 3-phosphate in the mycothiol biosynthesis pathway. The polypeptide is D-inositol 3-phosphate glycosyltransferase (Mycobacteroides abscessus (strain ATCC 19977 / DSM 44196 / CCUG 20993 / CIP 104536 / JCM 13569 / NCTC 13031 / TMC 1543 / L948) (Mycobacterium abscessus)).